The following is a 389-amino-acid chain: Chalcone synthase 2 (389 aa).

Position 55-62 (55-62) interacts with CoA; sequence KFQRMCDK. C164 acts as the Acyl-thioester intermediate in catalysis. Residues T197 and 216-217 each bind substrate; that span reads GD. CoA is bound at residue A308.

The protein belongs to the thiolase-like superfamily. Chalcone/stilbene synthases family. Homodimer.

It catalyses the reaction (E)-4-coumaroyl-CoA + 3 malonyl-CoA + 3 H(+) = 2',4,4',6'-tetrahydroxychalcone + 3 CO2 + 4 CoA. Its pathway is secondary metabolite biosynthesis; flavonoid biosynthesis. The primary product of this enzyme is 4,2',4',6'-tetrahydroxychalcone (also termed naringenin-chalcone or chalcone) which can under specific conditions spontaneously isomerize into naringenin. The chain is Chalcone synthase 2 (CHS2) from Medicago sativa (Alfalfa).